Reading from the N-terminus, the 81-residue chain is RBAK downstream neighbor protein (81 aa).

The N-terminal stretch at 1 to 22 (MWPPLLLLLLLLPAAPVPTAKA) is a signal peptide.

Its subcellular location is the secreted. This Homo sapiens (Human) protein is RBAK downstream neighbor protein (RBAKDN).